The chain runs to 346 residues: 3-keto-steroid reductase ERG27 (346 aa).

Positions 19, 42, and 48 each coordinate NADP(+). Catalysis depends on proton donor residues S182 and Y205. NADP(+) contacts are provided by Y205, K209, and S241. Catalysis depends on K209, which acts as the Lowers pKa of active site Tyr. A helical transmembrane segment spans residues 242–262; sequence FSFFQYLNVFTYYGMLFLFYL. N-linked (GlcNAc...) asparagine glycosylation occurs at N272.

The protein belongs to the short-chain dehydrogenases/reductases (SDR) family. ERG27 subfamily. In terms of assembly, heterotetramer of ERG25, ERG26, ERG27 and ERG28. ERG28 acts as a scaffold to tether ERG27 and other 4,4-demethylation-related enzymes, forming a demethylation enzyme complex, in the endoplasmic reticulum. Interacts with ERG25 and ERG28. Also interacts with ERG7, but only in lipid particles.

It is found in the endoplasmic reticulum membrane. It localises to the lipid droplet. The enzyme catalyses 3-dehydro-4alpha-methylzymosterol + NADPH + H(+) = 4alpha-methylzymosterol + NADP(+). Its pathway is steroid biosynthesis; zymosterol biosynthesis; zymosterol from lanosterol: step 5/6. Functionally, 3-keto-steroid reductase; part of the third module of ergosterol biosynthesis pathway that includes the late steps of the pathway. ERG27 is a catalytic component of the C-4 demethylation complex that catalyzes the reduction of the keto group on the C-3. The third module or late pathway involves the ergosterol synthesis itself through consecutive reactions that mainly occur in the endoplasmic reticulum (ER) membrane. Firstly, the squalene synthase ERG9 catalyzes the condensation of 2 farnesyl pyrophosphate moieties to form squalene, which is the precursor of all steroids. Squalene synthase is crucial for balancing the incorporation of farnesyl diphosphate (FPP) into sterol and nonsterol isoprene synthesis. Secondly, the squalene epoxidase ERG1 catalyzes the stereospecific oxidation of squalene to (S)-2,3-epoxysqualene, which is considered to be a rate-limiting enzyme in steroid biosynthesis. Then, the lanosterol synthase ERG7 catalyzes the cyclization of (S)-2,3 oxidosqualene to lanosterol, a reaction that forms the sterol core. In the next steps, lanosterol is transformed to zymosterol through a complex process involving various demethylation, reduction and desaturation reactions. The lanosterol 14-alpha-demethylase ERG11 (also known as CYP51) catalyzes C14-demethylation of lanosterol to produce 4,4'-dimethyl cholesta-8,14,24-triene-3-beta-ol, which is critical for ergosterol biosynthesis. The C-14 reductase ERG24 reduces the C14=C15 double bond of 4,4-dimethyl-cholesta-8,14,24-trienol to produce 4,4-dimethyl-cholesta-8,24-dienol. 4,4-dimethyl-cholesta-8,24-dienol is substrate of the C-4 demethylation complex ERG25-ERG26-ERG27 in which ERG25 catalyzes the three-step monooxygenation required for the demethylation of 4,4-dimethyl and 4alpha-methylsterols, ERG26 catalyzes the oxidative decarboxylation that results in a reduction of the 3-beta-hydroxy group at the C-3 carbon to an oxo group, and ERG27 is responsible for the reduction of the keto group on the C-3. ERG28 has a role as a scaffold to help anchor ERG25, ERG26 and ERG27 to the endoplasmic reticulum and ERG29 regulates the activity of the iron-containing C4-methylsterol oxidase ERG25. Then, the sterol 24-C-methyltransferase ERG6 catalyzes the methyl transfer from S-adenosyl-methionine to the C-24 of zymosterol to form fecosterol. The C-8 sterol isomerase ERG2 catalyzes the reaction which results in unsaturation at C-7 in the B ring of sterols and thus converts fecosterol to episterol. The sterol-C5-desaturase ERG3 then catalyzes the introduction of a C-5 double bond in the B ring to produce 5-dehydroepisterol. The C-22 sterol desaturase ERG5 further converts 5-dehydroepisterol into ergosta-5,7,22,24(28)-tetraen-3beta-ol by forming the C-22(23) double bond in the sterol side chain. Finally, ergosta-5,7,22,24(28)-tetraen-3beta-ol is substrate of the C-24(28) sterol reductase ERG4 to produce ergosterol. Facilitates the association of ERG7 with lipid particles preventing its digestion in the endoplasmic reticulum and the lipid particles. The sequence is that of 3-keto-steroid reductase ERG27 from Candida albicans (strain SC5314 / ATCC MYA-2876) (Yeast).